The following is a 461-amino-acid chain: Asparagine--tRNA ligase (461 aa).

This sequence belongs to the class-II aminoacyl-tRNA synthetase family. As to quaternary structure, homodimer.

The protein resides in the cytoplasm. The catalysed reaction is tRNA(Asn) + L-asparagine + ATP = L-asparaginyl-tRNA(Asn) + AMP + diphosphate + H(+). This chain is Asparagine--tRNA ligase, found in Geobacter metallireducens (strain ATCC 53774 / DSM 7210 / GS-15).